The following is a 137-amino-acid chain: MGAHLARRYLGDASVEPDPLRMPTFPPDYGFPERKEREMVATQQEMNDAQLVLQQRDYCAHYLIRFLKCKRDSFPNFLACKHERHDWDYCEHLDYVKRMKEFERERRLLQRKKRREQREADMAKGLGPGEVAPEVAL.

Gly2 carries the N-myristoyl glycine lipid modification. Residues 56-98 (RDYCAHYLIRFLKCKRDSFPNFLACKHERHDWDYCEHLDYVKR) enclose the CHCH domain. A Cx9C motif 1 motif is present at residues 59-69 (CAHYLIRFLKC). Disulfide bonds link Cys59-Cys90 and Cys69-Cys80. At Ser73 the chain carries Phosphoserine. The short motif at 80–90 (CKHERHDWDYC) is the Cx9C motif 2 element. The disordered stretch occupies residues 110 to 137 (QRKKRREQREADMAKGLGPGEVAPEVAL).

This sequence belongs to the complex I NDUFB7 subunit family. In terms of assembly, complex I is composed of 45 different subunits.

It localises to the mitochondrion inner membrane. Its subcellular location is the mitochondrion intermembrane space. Functionally, accessory subunit of the mitochondrial membrane respiratory chain NADH dehydrogenase (Complex I), that is believed not to be involved in catalysis. Complex I functions in the transfer of electrons from NADH to the respiratory chain. The immediate electron acceptor for the enzyme is believed to be ubiquinone. This chain is NADH dehydrogenase [ubiquinone] 1 beta subcomplex subunit 7 (NDUFB7), found in Bos taurus (Bovine).